Here is a 251-residue protein sequence, read N- to C-terminus: Hydroxyacylglutathione hydrolase (251 aa).

The Zn(2+) site is built by His-53, His-55, Asp-57, His-58, His-110, Asp-127, and His-165.

The protein belongs to the metallo-beta-lactamase superfamily. Glyoxalase II family. As to quaternary structure, monomer. Requires Zn(2+) as cofactor.

It carries out the reaction an S-(2-hydroxyacyl)glutathione + H2O = a 2-hydroxy carboxylate + glutathione + H(+). The protein operates within secondary metabolite metabolism; methylglyoxal degradation; (R)-lactate from methylglyoxal: step 2/2. Its function is as follows. Thiolesterase that catalyzes the hydrolysis of S-D-lactoyl-glutathione to form glutathione and D-lactic acid. The chain is Hydroxyacylglutathione hydrolase from Shigella boydii serotype 4 (strain Sb227).